A 358-amino-acid polypeptide reads, in one-letter code: MTQLFPGPIVRTPGLAELDARARDIFRRVVESYLETGEPVGSRTISKGGVALSPASIRNTMQDLAQLGLLDAPHTSAGRMPTHAGLRMFVDGFLEVGDVAEQEKRAIEARLAVKGRSFEEALAEASSILSGLAGGAGIVVTPVREGGVKHVEFVPLGGGQVLAVMVFEDGQVENRLMRQAPGVTPSALQEASNFLNARLRGRTLTEARTEMGGELDAARRQLNETAARLVEDGLAAWSGGEGDARSLIVRGQANLLADARAREDIDRVRQLFDDLSRRAQLIGLLDDVRDAEGVRIYIGAETRLFSLSGSSVIAAPYMTGRQKVLGAIGVIGPARLNYARVIPLVDYTARVLGRMMDG.

Belongs to the HrcA family.

Functionally, negative regulator of class I heat shock genes (grpE-dnaK-dnaJ and groELS operons). Prevents heat-shock induction of these operons. The sequence is that of Heat-inducible transcription repressor HrcA from Caulobacter vibrioides (strain ATCC 19089 / CIP 103742 / CB 15) (Caulobacter crescentus).